Consider the following 498-residue polypeptide: ATP synthase subunit beta, chloroplastic (498 aa).

172-179 (GGAGVGKT) contributes to the ATP binding site.

It belongs to the ATPase alpha/beta chains family. In terms of assembly, F-type ATPases have 2 components, CF(1) - the catalytic core - and CF(0) - the membrane proton channel. CF(1) has five subunits: alpha(3), beta(3), gamma(1), delta(1), epsilon(1). CF(0) has four main subunits: a(1), b(1), b'(1) and c(9-12).

The protein localises to the plastid. It is found in the chloroplast thylakoid membrane. It catalyses the reaction ATP + H2O + 4 H(+)(in) = ADP + phosphate + 5 H(+)(out). Functionally, produces ATP from ADP in the presence of a proton gradient across the membrane. The catalytic sites are hosted primarily by the beta subunits. The chain is ATP synthase subunit beta, chloroplastic from Populus alba (White poplar).